The following is a 390-amino-acid chain: tRNA(Met) cytidine acetate ligase (390 aa).

ATP-binding positions include 7 to 20, Gly-101, Asn-162, and Arg-187; that span reads VVEY…HKLH.

Belongs to the TmcAL family.

Its subcellular location is the cytoplasm. The catalysed reaction is cytidine(34) in elongator tRNA(Met) + acetate + ATP = N(4)-acetylcytidine(34) in elongator tRNA(Met) + AMP + diphosphate. Functionally, catalyzes the formation of N(4)-acetylcytidine (ac(4)C) at the wobble position of elongator tRNA(Met), using acetate and ATP as substrates. First activates an acetate ion to form acetyladenylate (Ac-AMP) and then transfers the acetyl group to tRNA to form ac(4)C34. The sequence is that of tRNA(Met) cytidine acetate ligase from Listeria monocytogenes serotype 4b (strain CLIP80459).